Consider the following 328-residue polypeptide: Ribosomal RNA small subunit methyltransferase H (328 aa).

S-adenosyl-L-methionine-binding positions include 37 to 39, Asp-57, Phe-83, Asp-104, and Gln-111; that span reads GGH.

This sequence belongs to the methyltransferase superfamily. RsmH family.

The protein resides in the cytoplasm. The catalysed reaction is cytidine(1402) in 16S rRNA + S-adenosyl-L-methionine = N(4)-methylcytidine(1402) in 16S rRNA + S-adenosyl-L-homocysteine + H(+). Functionally, specifically methylates the N4 position of cytidine in position 1402 (C1402) of 16S rRNA. The sequence is that of Ribosomal RNA small subunit methyltransferase H from Neisseria meningitidis serogroup C / serotype 2a (strain ATCC 700532 / DSM 15464 / FAM18).